Consider the following 62-residue polypeptide: Large ribosomal subunit protein uL29 (62 aa).

Belongs to the universal ribosomal protein uL29 family.

The sequence is that of Large ribosomal subunit protein uL29 from Chromobacterium violaceum (strain ATCC 12472 / DSM 30191 / JCM 1249 / CCUG 213 / NBRC 12614 / NCIMB 9131 / NCTC 9757 / MK).